Here is a 147-residue protein sequence, read N- to C-terminus: Hemoglobin subunit gamma-2 (147 aa).

The 145-residue stretch at histidine 3–histidine 147 folds into the Globin domain. A Phosphothreonine modification is found at threonine 13. Serine 45, serine 51, and serine 53 each carry phosphoserine. An N6-acetyllysine modification is found at lysine 60. Heme b is bound at residue histidine 64. Lysine 83 bears the N6-acetyllysine mark. A heme b-binding site is contributed by histidine 93. Residue cysteine 94 is modified to S-nitrosocysteine. Serine 140, serine 143, and serine 144 each carry phosphoserine.

This sequence belongs to the globin family. Heterotetramer of two alpha chains and two gamma chains in fetal hemoglobin (Hb F). Red blood cells.

Its function is as follows. Gamma chains make up the fetal hemoglobin F, in combination with alpha chains. The sequence is that of Hemoglobin subunit gamma-2 (HBG2) from Hylobates lar (Lar gibbon).